The following is a 386-amino-acid chain: Probable zinc transporter zrg17 (386 aa).

6 helical membrane passes run 102 to 122, 128 to 148, 163 to 183, 208 to 228, 243 to 263, and 268 to 288; these read ILFF…ILLT, IVEG…SFLV, MELL…MNLL, VHIH…FALL, FFHG…SLGY, and FLSH…GFSI.

Belongs to the cation diffusion facilitator (CDF) transporter (TC 2.A.4) family. SLC30A subfamily. Interacts with cis4.

It is found in the cytoplasm. It localises to the nucleus membrane. Probable transporter involved in the regulation of zinc homeostasis. This is Probable zinc transporter zrg17 (zrg17) from Schizosaccharomyces pombe (strain 972 / ATCC 24843) (Fission yeast).